The following is a 212-amino-acid chain: 2,3-bisphosphoglycerate-dependent phosphoglycerate mutase (212 aa).

Substrate-binding positions include 9–16 (RHGQSEWN), 22–23 (TG), Arg61, 88–91 (ERDY), Lys99, 115–116 (RR), and 159–160 (GN). The Tele-phosphohistidine intermediate role is filled by His10. Glu88 (proton donor/acceptor) is an active-site residue.

This sequence belongs to the phosphoglycerate mutase family. BPG-dependent PGAM subfamily. In terms of assembly, homodimer.

It catalyses the reaction (2R)-2-phosphoglycerate = (2R)-3-phosphoglycerate. It participates in carbohydrate degradation; glycolysis; pyruvate from D-glyceraldehyde 3-phosphate: step 3/5. Functionally, catalyzes the interconversion of 2-phosphoglycerate and 3-phosphoglycerate. The chain is 2,3-bisphosphoglycerate-dependent phosphoglycerate mutase from Methylobacterium radiotolerans (strain ATCC 27329 / DSM 1819 / JCM 2831 / NBRC 15690 / NCIMB 10815 / 0-1).